Consider the following 281-residue polypeptide: MKFIGAHVSAAGGVENTIARAQAIGANAFALFTKNQRQWQAAPLSEASIHAFKLACEKGGFRPEQILPHDSYLINLGHPDPDGLAKSRDAFLDEMKRCEQLGLCYLNFHPGSHLKQIPEAASLKLVSESINWALERSQGVTAVIENTAGQGTNLGWSFEHLATIIDGVEDKSRVGICFDTCHAFAAGYDLRTADACAAVFAEFEQTVGFQYLKGMHINGAKCTFGSRVDRHHSLREGNLGEAVFHHIMNDDRFDGIPLILETIDESIWGDEIRWLRSLAKA.

Zn(2+)-binding residues include H69, H109, E145, D179, H182, H216, D229, H231, and E261.

The protein belongs to the AP endonuclease 2 family. Requires Zn(2+) as cofactor.

The catalysed reaction is Endonucleolytic cleavage to 5'-phosphooligonucleotide end-products.. Its function is as follows. Endonuclease IV plays a role in DNA repair. It cleaves phosphodiester bonds at apurinic or apyrimidinic (AP) sites, generating a 3'-hydroxyl group and a 5'-terminal sugar phosphate. This chain is Probable endonuclease 4, found in Aeromonas hydrophila subsp. hydrophila (strain ATCC 7966 / DSM 30187 / BCRC 13018 / CCUG 14551 / JCM 1027 / KCTC 2358 / NCIMB 9240 / NCTC 8049).